The following is a 100-amino-acid chain: MARKGLIQRENKRQKLEQKYHSIRRSSKKEIRQVLSLSDKWEIYGKLQSPPRNSAPTRLHRRCFSTGRPRANYRDFGLSGQILREMVHACLLPGATRSSW.

The tract at residues methionine 1–serine 22 is disordered. Basic and acidic residues predominate over residues isoleucine 7–tyrosine 20.

It belongs to the universal ribosomal protein uS14 family. As to quaternary structure, part of the 30S ribosomal subunit.

Its subcellular location is the plastid. The protein localises to the chloroplast. In terms of biological role, binds 16S rRNA, required for the assembly of 30S particles. This Daucus carota (Wild carrot) protein is Small ribosomal subunit protein uS14c.